We begin with the raw amino-acid sequence, 319 residues long: Acetyl-coenzyme A carboxylase carboxyl transferase subunit alpha (319 aa).

The CoA carboxyltransferase C-terminal domain maps to 39–293 (RLQKKSNDLT…KAVLEKQLHE (255 aa)).

The protein belongs to the AccA family. As to quaternary structure, acetyl-CoA carboxylase is a heterohexamer composed of biotin carboxyl carrier protein (AccB), biotin carboxylase (AccC) and two subunits each of ACCase subunit alpha (AccA) and ACCase subunit beta (AccD).

It localises to the cytoplasm. It catalyses the reaction N(6)-carboxybiotinyl-L-lysyl-[protein] + acetyl-CoA = N(6)-biotinyl-L-lysyl-[protein] + malonyl-CoA. Its pathway is lipid metabolism; malonyl-CoA biosynthesis; malonyl-CoA from acetyl-CoA: step 1/1. Its function is as follows. Component of the acetyl coenzyme A carboxylase (ACC) complex. First, biotin carboxylase catalyzes the carboxylation of biotin on its carrier protein (BCCP) and then the CO(2) group is transferred by the carboxyltransferase to acetyl-CoA to form malonyl-CoA. The polypeptide is Acetyl-coenzyme A carboxylase carboxyl transferase subunit alpha (Neisseria gonorrhoeae (strain ATCC 700825 / FA 1090)).